Here is a 329-residue protein sequence, read N- to C-terminus: GTP 3',8-cyclase (329 aa).

Residues 8-234 (AFARKFFYLR…QIRQRSDGPA (227 aa)) enclose the Radical SAM core domain. R17 contributes to the GTP binding site. Positions 24 and 28 each coordinate [4Fe-4S] cluster. Y30 lines the S-adenosyl-L-methionine pocket. C31 is a binding site for [4Fe-4S] cluster. Residue R68 participates in GTP binding. G72 serves as a coordination point for S-adenosyl-L-methionine. T99 is a GTP binding site. S123 contributes to the S-adenosyl-L-methionine binding site. K160 is a binding site for GTP. Position 194 (M194) interacts with S-adenosyl-L-methionine. 2 residues coordinate [4Fe-4S] cluster: C257 and C260. 262 to 264 (RLR) lines the GTP pocket. Residue C274 coordinates [4Fe-4S] cluster.

The protein belongs to the radical SAM superfamily. MoaA family. In terms of assembly, monomer and homodimer. [4Fe-4S] cluster is required as a cofactor.

It catalyses the reaction GTP + AH2 + S-adenosyl-L-methionine = (8S)-3',8-cyclo-7,8-dihydroguanosine 5'-triphosphate + 5'-deoxyadenosine + L-methionine + A + H(+). It functions in the pathway cofactor biosynthesis; molybdopterin biosynthesis. Catalyzes the cyclization of GTP to (8S)-3',8-cyclo-7,8-dihydroguanosine 5'-triphosphate. The polypeptide is GTP 3',8-cyclase (Klebsiella pneumoniae (strain 342)).